The chain runs to 333 residues: Holliday junction branch migration complex subunit RuvB (333 aa).

The tract at residues 1–182 (MDERLLSGES…FGVLSRLEYY (182 aa)) is large ATPase domain (RuvB-L). ATP-binding positions include L21, R22, G63, K66, T67, T68, 129-131 (EDF), R172, Y182, and R219. Position 67 (T67) interacts with Mg(2+). The segment at 183 to 253 (TVDQLSAIVE…ITQMALELLQ (71 aa)) is small ATPAse domain (RuvB-S). Positions 256–333 (KLGLDHIDHK…EHFGMEIPKV (78 aa)) are head domain (RuvB-H). 2 residues coordinate DNA: R311 and R316.

It belongs to the RuvB family. In terms of assembly, homohexamer. Forms an RuvA(8)-RuvB(12)-Holliday junction (HJ) complex. HJ DNA is sandwiched between 2 RuvA tetramers; dsDNA enters through RuvA and exits via RuvB. An RuvB hexamer assembles on each DNA strand where it exits the tetramer. Each RuvB hexamer is contacted by two RuvA subunits (via domain III) on 2 adjacent RuvB subunits; this complex drives branch migration. In the full resolvosome a probable DNA-RuvA(4)-RuvB(12)-RuvC(2) complex forms which resolves the HJ.

It localises to the cytoplasm. The enzyme catalyses ATP + H2O = ADP + phosphate + H(+). In terms of biological role, the RuvA-RuvB-RuvC complex processes Holliday junction (HJ) DNA during genetic recombination and DNA repair, while the RuvA-RuvB complex plays an important role in the rescue of blocked DNA replication forks via replication fork reversal (RFR). RuvA specifically binds to HJ cruciform DNA, conferring on it an open structure. The RuvB hexamer acts as an ATP-dependent pump, pulling dsDNA into and through the RuvAB complex. RuvB forms 2 homohexamers on either side of HJ DNA bound by 1 or 2 RuvA tetramers; 4 subunits per hexamer contact DNA at a time. Coordinated motions by a converter formed by DNA-disengaged RuvB subunits stimulates ATP hydrolysis and nucleotide exchange. Immobilization of the converter enables RuvB to convert the ATP-contained energy into a lever motion, pulling 2 nucleotides of DNA out of the RuvA tetramer per ATP hydrolyzed, thus driving DNA branch migration. The RuvB motors rotate together with the DNA substrate, which together with the progressing nucleotide cycle form the mechanistic basis for DNA recombination by continuous HJ branch migration. Branch migration allows RuvC to scan DNA until it finds its consensus sequence, where it cleaves and resolves cruciform DNA. In Bacillus cereus (strain G9842), this protein is Holliday junction branch migration complex subunit RuvB.